A 133-amino-acid polypeptide reads, in one-letter code: Large ribosomal subunit protein eL14 (133 aa).

The protein belongs to the eukaryotic ribosomal protein eL14 family.

The polypeptide is Large ribosomal subunit protein eL14 (RPL14) (Griffithsia japonica (Red alga)).